A 340-amino-acid polypeptide reads, in one-letter code: Biotin synthase (340 aa).

The Radical SAM core domain maps to 45-272 (NAVQVSTLLS…ASYVRLSAGR (228 aa)). Cys60, Cys64, and Cys67 together coordinate [4Fe-4S] cluster. [2Fe-2S] cluster-binding residues include Cys104, Cys135, Cys195, and Arg267.

The protein belongs to the radical SAM superfamily. Biotin synthase family. As to quaternary structure, homodimer. It depends on [4Fe-4S] cluster as a cofactor. Requires [2Fe-2S] cluster as cofactor.

It catalyses the reaction (4R,5S)-dethiobiotin + (sulfur carrier)-SH + 2 reduced [2Fe-2S]-[ferredoxin] + 2 S-adenosyl-L-methionine = (sulfur carrier)-H + biotin + 2 5'-deoxyadenosine + 2 L-methionine + 2 oxidized [2Fe-2S]-[ferredoxin]. It participates in cofactor biosynthesis; biotin biosynthesis; biotin from 7,8-diaminononanoate: step 2/2. Its function is as follows. Catalyzes the conversion of dethiobiotin (DTB) to biotin by the insertion of a sulfur atom into dethiobiotin via a radical-based mechanism. The sequence is that of Biotin synthase from Thioalkalivibrio sulfidiphilus (strain HL-EbGR7).